A 210-amino-acid chain; its full sequence is MLTKEIQIAVEKGEMLPLMEEFYTIQGEGYHTGTAAYFIRIGGCDVGCHWCDVKESWNAALHPPTKTDVIVENATKYAKTIVVTGGEPLTWDMTVLTQRLKAENLQVHIETSGAYPVTGAWDWFCLSPKKNKLPVAEAYEIAHELKVIIYNKHDFIFAEEQAAKVNKNAILFLQSEWSKKEEMTPFIVDYVMNNPKWRVSLQTHKYLNIP.

Residues 25-27 and arginine 40 each bind substrate; that span reads IQG. Residues 31–210 form the Radical SAM core domain; it reads HTGTAAYFIR…LQTHKYLNIP (180 aa). [4Fe-4S] cluster is bound by residues cysteine 44, cysteine 48, and cysteine 51. Position 84 (threonine 84) interacts with substrate. Residues glycine 86 and 127–129 each bind S-adenosyl-L-methionine; that span reads SPK. A substrate-binding site is contributed by proline 210.

It belongs to the radical SAM superfamily. 7-carboxy-7-deazaguanine synthase family. As to quaternary structure, homodimer. Requires [4Fe-4S] cluster as cofactor. It depends on S-adenosyl-L-methionine as a cofactor. Mg(2+) serves as cofactor.

It carries out the reaction 6-carboxy-5,6,7,8-tetrahydropterin + H(+) = 7-carboxy-7-deazaguanine + NH4(+). It functions in the pathway purine metabolism; 7-cyano-7-deazaguanine biosynthesis. Catalyzes the complex heterocyclic radical-mediated conversion of 6-carboxy-5,6,7,8-tetrahydropterin (CPH4) to 7-carboxy-7-deazaguanine (CDG), a step common to the biosynthetic pathways of all 7-deazapurine-containing compounds. In Flavobacterium psychrophilum (strain ATCC 49511 / DSM 21280 / CIP 103535 / JIP02/86), this protein is 7-carboxy-7-deazaguanine synthase.